The following is a 206-amino-acid chain: RILP-like protein 2 (206 aa).

A disordered region spans residues M1 to L29. Residues E8–G19 are compositionally biased toward acidic residues. The RH1 domain occupies G19 to E108. A coiled-coil region spans residues L67–S159. The RH2 domain occupies R125–L197. Residues L161–E189 form a disordered region. Over residues P168–L177 the composition is skewed to basic and acidic residues.

The protein belongs to the RILPL family. In terms of assembly, homodimer. Interacts with RAC1. Interacts (via N-terminus) with MYO5A, the interaction is required for its role in dendrite formation. Interacts with RAB8A; interaction is dependent on the phosphorylation of RAB8A on 'Thr-72'. Interacts with RAB10 and RAB12; interaction is dependent on the phosphorylation of 'Thr-73' on RAB10 and 'Ser-105' on RAB12.

It localises to the cytoplasm. Its subcellular location is the cytosol. The protein localises to the cytoskeleton. It is found in the microtubule organizing center. The protein resides in the centrosome. It localises to the cell projection. Its subcellular location is the cilium. Its function is as follows. Involved in cell shape and neuronal morphogenesis, positively regulating the establishment and maintenance of dendritic spines. Plays a role in cellular protein transport, including protein transport away from primary cilia. May function via activation of RAC1 and PAK1. This is RILP-like protein 2 (RILPL2) from Bos taurus (Bovine).